The sequence spans 280 residues: Pantothenate synthetase (280 aa).

Methionine 31 to histidine 38 lines the ATP pocket. The Proton donor role is filled by histidine 38. Glutamine 62 contributes to the (R)-pantoate binding site. Glutamine 62 contributes to the beta-alanine binding site. Glycine 150 to aspartate 153 serves as a coordination point for ATP. A (R)-pantoate-binding site is contributed by glutamine 156. ATP-binding positions include valine 179 and methionine 187–arginine 190.

Belongs to the pantothenate synthetase family. As to quaternary structure, homodimer.

The protein localises to the cytoplasm. It carries out the reaction (R)-pantoate + beta-alanine + ATP = (R)-pantothenate + AMP + diphosphate + H(+). The protein operates within cofactor biosynthesis; (R)-pantothenate biosynthesis; (R)-pantothenate from (R)-pantoate and beta-alanine: step 1/1. Its function is as follows. Catalyzes the condensation of pantoate with beta-alanine in an ATP-dependent reaction via a pantoyl-adenylate intermediate. The chain is Pantothenate synthetase from Xanthomonas oryzae pv. oryzae (strain MAFF 311018).